The sequence spans 340 residues: MALSLVLGLALSALVIGIRPQVAVPFGLSVLGSALLGSLLLPVLRRWKAGQVIREEGPQSHHKKAGTPTMGGLSFLPVGLLVAGIGSGWDPQWLAVALLTLAYTVVGWLDDWLVIRQRSNKGLSAKSKLLLQVGIGLVFCGYLAWQGIPTVLTLPGIGALPLGWLFWPLALFVLVGTNNAVNLADGMDGLAAGMVALVLAGLGLTAADPVLALVAFALSGTCLGFLVHNHHRARLFMGDTGSLGLGGALAGLALLGDQLWALAWMGAVLVAEALSVILQVGYFQYTKRKTGQGKRLLRMSPLHHHLELGGWSEVQVVGCFYGLTALLVGLGWAWWHWAGA.

The next 9 helical transmembrane spans lie at Val24–Leu44, Thr69–Trp89, Ala95–Ile115, Leu129–Pro149, Gly156–Gly176, Ala196–Phe216, Leu235–Leu255, Trp260–Val280, and Val316–His336.

This sequence belongs to the glycosyltransferase 4 family. MraY subfamily. The cofactor is Mg(2+).

It is found in the cell inner membrane. It catalyses the reaction UDP-N-acetyl-alpha-D-muramoyl-L-alanyl-gamma-D-glutamyl-meso-2,6-diaminopimeloyl-D-alanyl-D-alanine + di-trans,octa-cis-undecaprenyl phosphate = di-trans,octa-cis-undecaprenyl diphospho-N-acetyl-alpha-D-muramoyl-L-alanyl-D-glutamyl-meso-2,6-diaminopimeloyl-D-alanyl-D-alanine + UMP. Its pathway is cell wall biogenesis; peptidoglycan biosynthesis. Catalyzes the initial step of the lipid cycle reactions in the biosynthesis of the cell wall peptidoglycan: transfers peptidoglycan precursor phospho-MurNAc-pentapeptide from UDP-MurNAc-pentapeptide onto the lipid carrier undecaprenyl phosphate, yielding undecaprenyl-pyrophosphoryl-MurNAc-pentapeptide, known as lipid I. The protein is Phospho-N-acetylmuramoyl-pentapeptide-transferase of Synechococcus sp. (strain JA-3-3Ab) (Cyanobacteria bacterium Yellowstone A-Prime).